We begin with the raw amino-acid sequence, 41 residues long: Giant hemoglobin AI chain (41 aa).

The 40-residue stretch at 2-41 folds into the Globin domain; sequence DCGMLQRIKVKQQWASVYSSGIAREDFGEAIWKAVFALAP.

This sequence belongs to the globin family. In terms of assembly, giant hemoglobin is composed of four heme-containing chains (AI to AIV), and two linker chains (AV and AVI).

The chain is Giant hemoglobin AI chain from Lamellibrachia sp. (Deep-sea giant tube worm).